We begin with the raw amino-acid sequence, 231 residues long: Adenosylcobinamide-GDP ribazoletransferase (231 aa).

6 consecutive transmembrane segments (helical) span residues 29–49, 53–73, 101–121, 126–146, 167–187, and 211–231; these read ICAY…SMKL, NFLW…LFHF, IGPF…YAFL, IDLI…LHFG, LISL…IISL, and DVLG…LSLI.

Belongs to the CobS family. The cofactor is Mg(2+).

It is found in the cell inner membrane. It carries out the reaction alpha-ribazole + adenosylcob(III)inamide-GDP = adenosylcob(III)alamin + GMP + H(+). The enzyme catalyses alpha-ribazole 5'-phosphate + adenosylcob(III)inamide-GDP = adenosylcob(III)alamin 5'-phosphate + GMP + H(+). Its pathway is cofactor biosynthesis; adenosylcobalamin biosynthesis; adenosylcobalamin from cob(II)yrinate a,c-diamide: step 7/7. Functionally, joins adenosylcobinamide-GDP and alpha-ribazole to generate adenosylcobalamin (Ado-cobalamin). Also synthesizes adenosylcobalamin 5'-phosphate from adenosylcobinamide-GDP and alpha-ribazole 5'-phosphate. The sequence is that of Adenosylcobinamide-GDP ribazoletransferase from Kosmotoga olearia (strain ATCC BAA-1733 / DSM 21960 / TBF 19.5.1).